The following is a 204-amino-acid chain: MSAEKRLLQEYRSILKEQRQKGSASTLSSNGILDLKPVSEDNFYKWTAKLKGPTDTGYQDAFWELQIDIPSNYPTQPPKFTFIVSDDIPRNRRQRQTNQIQDDDEFEGAEKEVLRHCYRMPHPNIAFNTGEICLDILQAKWTPAWTLSSALTAIVLLLNDPEPLSPLDIDMANLMKINDLKAYNSLIEYYVGRYSIEEEVYILN.

One can recognise a UBC core domain in the interval 2-196 (SAEKRLLQEY…IEYYVGRYSI (195 aa)). Residue Cys133 is the Glycyl thioester intermediate of the active site.

This sequence belongs to the ubiquitin-conjugating enzyme family.

It is found in the peroxisome membrane. The catalysed reaction is S-ubiquitinyl-[E1 ubiquitin-activating enzyme]-L-cysteine + [E2 ubiquitin-conjugating enzyme]-L-cysteine = [E1 ubiquitin-activating enzyme]-L-cysteine + S-ubiquitinyl-[E2 ubiquitin-conjugating enzyme]-L-cysteine.. It functions in the pathway protein modification; protein ubiquitination. Its function is as follows. E2 ubiquitin-conjugating enzyme involved in peroxisome biosynthesis. Acts late in peroxisomal matrix protein import, after matrix protein translocation. Required for both monoubiquitination and polyubiquitination of coreceptor PEX20. polyubiquitination of PEX20 at conserved lysine 'Lys-19' near the N-terminus leads to its and proteasomal degradation, whereas a monoubiquitination at the conserved cysteine 'Cys-8' is essential for its recycling. This is E2 ubiquitin-conjugating enzyme PEX4 from Komagataella phaffii (strain GS115 / ATCC 20864) (Yeast).